A 1367-amino-acid polypeptide reads, in one-letter code: Phospholipid-transporting ATPase C4F10.16c (1367 aa).

Topologically, residues M1–N154 are cytoplasmic. The disordered stretch occupies residues H34 to G104. Basic and acidic residues predominate over residues S50–D70. Residues F77–V92 show a composition bias toward polar residues. Residues I155–F172 traverse the membrane as a helical segment. The Lumenal portion of the chain corresponds to C173–L177. Residues G178–I197 form a helical membrane-spanning segment. Residues E198–D482 are Cytoplasmic-facing. Residues L483 to V503 form a helical membrane-spanning segment. At L504–G531 the chain is on the lumenal side. Residues I532–I552 traverse the membrane as a helical segment. Residues T553–Q1091 are Cytoplasmic-facing. Residue D600 is the 4-aspartylphosphate intermediate of the active site. D600, K601, T602, E724, F765, S767, K770, K788, R822, T823, T902, G903, D904, R1009, and K1015 together coordinate ATP. Residue D600 coordinates Mg(2+). T602 serves as a coordination point for Mg(2+). D1035 contacts Mg(2+). ATP is bound by residues N1038 and D1039. D1039 serves as a coordination point for Mg(2+). The helical transmembrane segment at M1092–F1112 threads the bilayer. Over Y1113–Y1124 the chain is Lumenal. Residues T1125–F1145 form a helical membrane-spanning segment. Topologically, residues D1146–R1174 are cytoplasmic. A helical membrane pass occupies residues F1175–F1197. Residues K1198 to C1212 lie on the Lumenal side of the membrane. Residues I1213–L1233 form a helical membrane-spanning segment. The Cytoplasmic segment spans residues M1234 to N1240. Residues L1241–Y1261 form a helical membrane-spanning segment. The Lumenal portion of the chain corresponds to S1262–R1276. Residues T1277–P1297 traverse the membrane as a helical segment. An a 1,2-diacyl-sn-glycero-3-phospho-L-serine-binding site is contributed by R1298. The Cytoplasmic portion of the chain corresponds to R1298 to K1367.

The protein belongs to the cation transport ATPase (P-type) (TC 3.A.3) family. Type IV subfamily. It depends on Mg(2+) as a cofactor.

It is found in the cell membrane. The protein resides in the endoplasmic reticulum membrane. It catalyses the reaction ATP + H2O + phospholipidSide 1 = ADP + phosphate + phospholipidSide 2.. It carries out the reaction a 1,2-diacyl-sn-glycero-3-phosphoethanolamine(out) + ATP + H2O = a 1,2-diacyl-sn-glycero-3-phosphoethanolamine(in) + ADP + phosphate + H(+). The catalysed reaction is a 1,2-diacyl-sn-glycero-3-phosphocholine(out) + ATP + H2O = a 1,2-diacyl-sn-glycero-3-phosphocholine(in) + ADP + phosphate + H(+). The enzyme catalyses a beta-D-glucosyl-(1&lt;-&gt;1')-N-acylsphing-4-enine(out) + ATP + H2O = a beta-D-glucosyl-(1&lt;-&gt;1')-N-acylsphing-4-enine(in) + ADP + phosphate + H(+). It catalyses the reaction a 1,2-diacyl-sn-glycero-3-phospho-L-serine(out) + ATP + H2O = a 1,2-diacyl-sn-glycero-3-phospho-L-serine(in) + ADP + phosphate + H(+). Catalytic component of a P4-ATPase flippase complex which catalyzes the hydrolysis of ATP coupled to the transport of glucosylceramide, phosphatidylcholine, phosphatidylethanolamine, and small amounts of phosphatidylserine from the lumenal to the cytosolic leaflet of the cell membrane and ensures the maintenance of asymmetric distribution of phospholipids. This chain is Phospholipid-transporting ATPase C4F10.16c, found in Schizosaccharomyces pombe (strain 972 / ATCC 24843) (Fission yeast).